Consider the following 164-residue polypeptide: Diphosphoinositol polyphosphate phosphohydrolase 3-beta (164 aa).

Residues R9, 17-19 (KKR), and 38-40 (SSR) each bind substrate. The Nudix hydrolase domain occupies 17–144 (KKRAACLCFR…VHAEYLQKLK (128 aa)). Residues G49 and E65 each coordinate Mg(2+). The Nudix box motif lies at 50 to 71 (GGMEPEEEPGGAAVREVFEEAG). The active-site Proton acceptor is the E68. E69 is a binding site for Mg(2+). Residues 89 to 91 (RKH), R115, and K133 each bind substrate. Residues 144–164 (KLGGSPTNGNSVAPSPPEGDP) form a disordered region.

It belongs to the Nudix hydrolase family. DIPP subfamily. It depends on Mg(2+) as a cofactor. Mn(2+) is required as a cofactor.

The protein resides in the cytoplasm. It carries out the reaction diphospho-myo-inositol polyphosphate + H2O = myo-inositol polyphosphate + phosphate.. The catalysed reaction is P(1),P(6)-bis(5'-adenosyl) hexaphosphate + H2O = adenosine 5'-pentaphosphate + AMP + 2 H(+). The enzyme catalyses P(1),P(5)-bis(5'-adenosyl) pentaphosphate + H2O = adenosine 5'-tetraphosphate + AMP + 2 H(+). Its function is as follows. Cleaves a beta-phosphate from the diphosphate groups in PP-InsP5 (diphosphoinositol pentakisphosphate), suggesting that it may play a role in signal transduction. Also able to catalyze the hydrolysis of dinucleoside oligophosphates, with Ap6A and Ap5A being the preferred substrates. The major reaction products are ADP and p4a from Ap6A and ADP and ATP from Ap5A. Also able to hydrolyze 5-phosphoribose 1-diphosphate. The protein is Diphosphoinositol polyphosphate phosphohydrolase 3-beta of Bos taurus (Bovine).